The following is a 403-amino-acid chain: D-alanyl-D-alanine carboxypeptidase DacA (403 aa).

The first 29 residues, 1–29 (MNTIFSARIMKRLALTTALCTAFISAAHA), serve as a signal peptide directing secretion. Ser73 (acyl-ester intermediate) is an active-site residue. The active-site Proton acceptor is Lys76. Residue Ser139 is part of the active site. Lys242 contributes to the substrate binding site.

It belongs to the peptidase S11 family.

The protein localises to the cell inner membrane. The enzyme catalyses Preferential cleavage: (Ac)2-L-Lys-D-Ala-|-D-Ala. Also transpeptidation of peptidyl-alanyl moieties that are N-acyl substituents of D-alanine.. It participates in cell wall biogenesis; peptidoglycan biosynthesis. Its function is as follows. Removes C-terminal D-alanyl residues from sugar-peptide cell wall precursors. The chain is D-alanyl-D-alanine carboxypeptidase DacA (dacA) from Escherichia coli O157:H7.